The primary structure comprises 307 residues: 4-hydroxybenzoate octaprenyltransferase (307 aa).

7 consecutive transmembrane segments (helical) span residues Ala-27–Phe-47, Trp-50–Ile-70, Leu-101–Leu-121, Cys-142–Phe-162, Ala-179–Tyr-199, Leu-239–Leu-259, and Phe-285–Trp-305.

Belongs to the UbiA prenyltransferase family. Requires Mg(2+) as cofactor.

The protein resides in the cell inner membrane. The catalysed reaction is all-trans-octaprenyl diphosphate + 4-hydroxybenzoate = 4-hydroxy-3-(all-trans-octaprenyl)benzoate + diphosphate. It participates in cofactor biosynthesis; ubiquinone biosynthesis. Functionally, catalyzes the prenylation of para-hydroxybenzoate (PHB) with an all-trans polyprenyl group. Mediates the second step in the final reaction sequence of ubiquinone-8 (UQ-8) biosynthesis, which is the condensation of the polyisoprenoid side chain with PHB, generating the first membrane-bound Q intermediate 3-octaprenyl-4-hydroxybenzoate. The protein is 4-hydroxybenzoate octaprenyltransferase of Methylibium petroleiphilum (strain ATCC BAA-1232 / LMG 22953 / PM1).